The sequence spans 430 residues: Asparagine--tRNA ligase (430 aa).

It belongs to the class-II aminoacyl-tRNA synthetase family. In terms of assembly, homodimer.

Its subcellular location is the cytoplasm. It catalyses the reaction tRNA(Asn) + L-asparagine + ATP = L-asparaginyl-tRNA(Asn) + AMP + diphosphate + H(+). The chain is Asparagine--tRNA ligase from Staphylococcus aureus (strain MRSA252).